Consider the following 284-residue polypeptide: Protoheme IX farnesyltransferase (284 aa).

The next 9 membrane-spanning stretches (helical) occupy residues Ser-2–Val-19, Ile-23–Ser-45, Gly-69–Ala-89, Leu-92–Trp-112, Ile-121–Gly-141, Leu-148–Phe-168, Val-194–Gly-214, Leu-217–Trp-237, and Leu-263–Gly-283.

It belongs to the UbiA prenyltransferase family. Protoheme IX farnesyltransferase subfamily. Interacts with CtaA.

It localises to the cell inner membrane. The enzyme catalyses heme b + (2E,6E)-farnesyl diphosphate + H2O = Fe(II)-heme o + diphosphate. It functions in the pathway porphyrin-containing compound metabolism; heme O biosynthesis; heme O from protoheme: step 1/1. In terms of biological role, converts heme B (protoheme IX) to heme O by substitution of the vinyl group on carbon 2 of heme B porphyrin ring with a hydroxyethyl farnesyl side group. This is Protoheme IX farnesyltransferase from Cereibacter sphaeroides (Rhodobacter sphaeroides).